The primary structure comprises 382 residues: D-galactonate dehydratase (382 aa).

Aspartate 183 contacts Mg(2+). The active-site Proton donor is histidine 185. The Mg(2+) site is built by glutamate 209 and glutamate 235. Histidine 285 functions as the Proton acceptor in the catalytic mechanism.

The protein belongs to the mandelate racemase/muconate lactonizing enzyme family. GalD subfamily. The cofactor is Mg(2+).

It carries out the reaction D-galactonate = 2-dehydro-3-deoxy-D-galactonate + H2O. It participates in carbohydrate acid metabolism; D-galactonate degradation; D-glyceraldehyde 3-phosphate and pyruvate from D-galactonate: step 1/3. Its function is as follows. Catalyzes the dehydration of D-galactonate to 2-keto-3-deoxy-D-galactonate. This chain is D-galactonate dehydratase, found in Xanthomonas campestris pv. campestris (strain 8004).